The chain runs to 591 residues: V-type ATP synthase alpha chain (591 aa).

232-239 (GPFGAGKT) provides a ligand contact to ATP.

Belongs to the ATPase alpha/beta chains family.

It catalyses the reaction ATP + H2O + 4 H(+)(in) = ADP + phosphate + 5 H(+)(out). In terms of biological role, produces ATP from ADP in the presence of a proton gradient across the membrane. The V-type alpha chain is a catalytic subunit. The chain is V-type ATP synthase alpha chain from Clostridium perfringens (strain ATCC 13124 / DSM 756 / JCM 1290 / NCIMB 6125 / NCTC 8237 / Type A).